The sequence spans 396 residues: Elongation factor Tu (396 aa).

In terms of domain architecture, tr-type G spans 10 to 206; sequence KPHVNVGTIG…VLDTYIPEPE (197 aa). Residues 19-26 form a G1 region; sequence GHVDHGKT. 19 to 26 is a binding site for GTP; the sequence is GHVDHGKT. Position 26 (Thr-26) interacts with Mg(2+). The interval 60-64 is G2; the sequence is GITIN. Residues 81–84 form a G3 region; the sequence is DCPG. GTP-binding positions include 81 to 85 and 136 to 139; these read DCPGH and NKCD. The tract at residues 136–139 is G4; it reads NKCD. The G5 stretch occupies residues 174–176; it reads SAT.

It belongs to the TRAFAC class translation factor GTPase superfamily. Classic translation factor GTPase family. EF-Tu/EF-1A subfamily. In terms of assembly, monomer.

It localises to the cytoplasm. The catalysed reaction is GTP + H2O = GDP + phosphate + H(+). Functionally, GTP hydrolase that promotes the GTP-dependent binding of aminoacyl-tRNA to the A-site of ribosomes during protein biosynthesis. This is Elongation factor Tu from Psychrobacter cryohalolentis (strain ATCC BAA-1226 / DSM 17306 / VKM B-2378 / K5).